Reading from the N-terminus, the 380-residue chain is Probable inactive dehydrogenase easA (380 aa).

FMN is bound by residues 25-27 (PMT), Ala60, Gln102, and His171. Residues His171 and Asn174 each coordinate substrate. Residues Lys223, Gly299, 324-325 (GR), and Arg325 contribute to the FMN site. Tyr352 contacts substrate.

Belongs to the NADH:flavin oxidoreductase/NADH oxidase family.

Its function is as follows. Probable inactive dehydrogenase; part of the gene cluster that mediates the biosynthesis of fungal ergot alkaloid. DmaW catalyzes the first step of ergot alkaloid biosynthesis by condensing dimethylallyl diphosphate (DMAP) and tryptophan to form 4-dimethylallyl-L-tryptophan. The second step is catalyzed by the methyltransferase easF that methylates 4-dimethylallyl-L-tryptophan in the presence of S-adenosyl-L-methionine, resulting in the formation of 4-dimethylallyl-L-abrine. The catalase easC and the FAD-dependent oxidoreductase easE then transform 4-dimethylallyl-L-abrine to chanoclavine-I which is further oxidized by easD in the presence of NAD(+), resulting in the formation of chanoclavine-I aldehyde. Agroclavine dehydrogenase easG then mediates the conversion of chanoclavine-I aldehyde to agroclavine via a non-enzymatic adduct reaction: the substrate is an iminium intermediate that is formed spontaneously from chanoclavine-I aldehyde in the presence of glutathione. The presence of easA is not required to complete this reaction. Further conversion of agroclavine to paspalic acid is a two-step process involving oxidation of agroclavine to elymoclavine and of elymoclavine to paspalic acid, the second step being performed by the elymoclavine oxidase cloA. Paspalic acid is then further converted to D-lysergic acid. Ergopeptines are assembled from D-lysergic acid and three different amino acids by the D-lysergyl-peptide-synthetases composed each of a monomudular and a trimodular nonribosomal peptide synthetase subunit. LpsB and lpsC encode the monomodular subunits responsible for D-lysergic acid activation and incorporation into the ergopeptine backbone. LpsA1 and A2 subunits encode the trimodular nonribosomal peptide synthetase assembling the tripeptide portion of ergopeptines. LpsA1 is responsible for formation of the major ergopeptine, ergotamine, and lpsA2 for alpha-ergocryptine, the minor ergopeptine of the total alkaloid mixture elaborated by C.purpurea. D-lysergyl-tripeptides are assembled by the nonribosomal peptide synthetases and released as N-(D-lysergyl-aminoacyl)-lactams. Cyclolization of the D-lysergyl-tripeptides is performed by the Fe(2+)/2-ketoglutarate-dependent dioxygenase easH which introduces a hydroxyl group into N-(D-lysergyl-aminoacyl)-lactam at alpha-C of the aminoacyl residue followed by spontaneous condensation with the terminal lactam carbonyl group. The sequence is that of Probable inactive dehydrogenase easA from Claviceps purpurea (strain 20.1) (Ergot fungus).